Here is a 414-residue protein sequence, read N- to C-terminus: Chaperone protein dnaJ 39 (414 aa).

Residues 1–24 (MATHSSRSENKDAGEEDELRRRNP) are compositionally biased toward basic and acidic residues. Residues 1–36 (MATHSSRSENKDAGEEDELRRRNPYEVLGIPSNSTD) are disordered. The J domain maps to 23–88 (NPYEVLGIPS…ENRRLYDTTG (66 aa)). Positions 296 to 324 (EKESLRSTEAQIVSKRTELLKFEAEYHEV) form a coiled coil. Positions 362 to 395 (TKQGSSKSRSWSKKKSSLLMEPREEGEVAVREEG) are disordered. The span at 382-395 (EPREEGEVAVREEG) shows a compositional bias: basic and acidic residues.

Belongs to the DnaJ family. C/III subfamily. As to expression, expressed constitutively at low levels in seedlings, roots, leaves, stems, flowers and siliques.

The protein resides in the membrane. Plays a continuous role in plant development probably in the structural organization of compartments. Seems to be involved in early gravitropic signal transduction within the gravity-perceiving cells (statocytes). In Arabidopsis thaliana (Mouse-ear cress), this protein is Chaperone protein dnaJ 39 (ATJ39).